We begin with the raw amino-acid sequence, 82 residues long: Small ribosomal subunit protein uS17 (82 aa).

It belongs to the universal ribosomal protein uS17 family. In terms of assembly, part of the 30S ribosomal subunit.

In terms of biological role, one of the primary rRNA binding proteins, it binds specifically to the 5'-end of 16S ribosomal RNA. The sequence is that of Small ribosomal subunit protein uS17 from Shewanella piezotolerans (strain WP3 / JCM 13877).